We begin with the raw amino-acid sequence, 498 residues long: Lysine--tRNA ligase (498 aa).

Residues Glu407 and Glu414 each coordinate Mg(2+).

This sequence belongs to the class-II aminoacyl-tRNA synthetase family. Homodimer. The cofactor is Mg(2+).

Its subcellular location is the cytoplasm. The enzyme catalyses tRNA(Lys) + L-lysine + ATP = L-lysyl-tRNA(Lys) + AMP + diphosphate. The protein is Lysine--tRNA ligase of Rhizobium johnstonii (strain DSM 114642 / LMG 32736 / 3841) (Rhizobium leguminosarum bv. viciae).